Consider the following 83-residue polypeptide: Gas vesicle protein G1 (83 aa).

It belongs to the gas vesicle GvpG family. As to quaternary structure, gvpF to GvpM interact with each other in vitro, and may form multi-subunit complex(es). Might interact with GvpA1.

The protein localises to the gas vesicle. Functionally, proteins GvpF to GvpM might be involved in nucleating gas vesicle formation. A minor component of the gas vesicle. Gas vesicles are hollow, gas filled proteinaceous nanostructures found in several microbial planktonic microorganisms. They allow positioning of halobacteria at the optimal depth for growth in the poorly aerated, shallow brine pools of their habitat. Expression of a 9.5 kb p-vac DNA fragment containing 2 divergently transcribed regions (gvpD-gvpE-gvpF-gvpG-gvpH-gvpI-gvpJ-gvpK-gvpL-gvpM and gvpA-gvpC-gvpN-gvpO) allows H.volcanii to produce gas vesicles. A minimal gas vesicle can be made in H.volcanii by gvpA1-gvpO1 plus gvpF1-gvpG1-gvpJ1-gvpK1-gvpL1-gvpM1; lack of enough GvpJ1 prevents formation. A similar region restores gas vesicle production in H.halobium without the p-vac locus, but it still has the c-vac locus. This is Gas vesicle protein G1 (gvpG11) from Halobacterium salinarum (strain ATCC 700922 / JCM 11081 / NRC-1) (Halobacterium halobium).